Reading from the N-terminus, the 149-residue chain is Calmodulin (149 aa).

A2 is subject to N-acetylalanine. EF-hand domains follow at residues 8 to 43, 44 to 79, 81 to 116, and 117 to 149; these read EQIA…LGQN, PTEA…KMKD, DSEE…LGEK, and LTDE…MLAK. Ca(2+)-binding residues include D21, D23, D25, C27, E32, D57, D59, N61, T63, E68, D94, D96, N98, and E105. K116 bears the N6,N6,N6-trimethyllysine mark. Ca(2+) contacts are provided by D130, D132, D134, Q136, and E141.

The protein belongs to the calmodulin family.

Calmodulin mediates the control of a large number of enzymes, ion channels and other proteins by Ca(2+). Among the enzymes to be stimulated by the calmodulin-Ca(2+) complex are a number of protein kinases and phosphatases. The polypeptide is Calmodulin (CALM1) (Solanum lycopersicum (Tomato)).